A 345-amino-acid chain; its full sequence is Biotin synthase (345 aa).

Positions 66-291 constitute a Radical SAM core domain; the sequence is PEVEIEGIIS…RTILRFAGGR (226 aa). 3 residues coordinate [4Fe-4S] cluster: C81, C85, and C88. Residues C124, C157, C216, and R286 each contribute to the [2Fe-2S] cluster site.

The protein belongs to the radical SAM superfamily. Biotin synthase family. As to quaternary structure, homodimer. The cofactor is [4Fe-4S] cluster. Requires [2Fe-2S] cluster as cofactor.

It catalyses the reaction (4R,5S)-dethiobiotin + (sulfur carrier)-SH + 2 reduced [2Fe-2S]-[ferredoxin] + 2 S-adenosyl-L-methionine = (sulfur carrier)-H + biotin + 2 5'-deoxyadenosine + 2 L-methionine + 2 oxidized [2Fe-2S]-[ferredoxin]. The protein operates within cofactor biosynthesis; biotin biosynthesis; biotin from 7,8-diaminononanoate: step 2/2. In terms of biological role, catalyzes the conversion of dethiobiotin (DTB) to biotin by the insertion of a sulfur atom into dethiobiotin via a radical-based mechanism. The chain is Biotin synthase from Mycobacterium leprae (strain Br4923).